The primary structure comprises 1322 residues: Phosphoribosylformylglycinamidine synthase (1322 aa).

Residues 300–311 (GASTGAGGEIRD) and Ala-702 each bind ATP. 4 residues coordinate Mg(2+): Asp-703, Glu-742, Asn-746, and Asp-915. Ser-917 contacts ATP. One can recognise a Glutamine amidotransferase type-1 domain in the interval 1073-1322 (VAILREQGIN…LFRNARAWVG (250 aa)). The Nucleophile role is filled by Cys-1166. Residues His-1287 and Glu-1289 contribute to the active site.

It in the N-terminal section; belongs to the FGAMS family. Monomer.

The protein localises to the cytoplasm. The catalysed reaction is N(2)-formyl-N(1)-(5-phospho-beta-D-ribosyl)glycinamide + L-glutamine + ATP + H2O = 2-formamido-N(1)-(5-O-phospho-beta-D-ribosyl)acetamidine + L-glutamate + ADP + phosphate + H(+). It functions in the pathway purine metabolism; IMP biosynthesis via de novo pathway; 5-amino-1-(5-phospho-D-ribosyl)imidazole from N(2)-formyl-N(1)-(5-phospho-D-ribosyl)glycinamide: step 1/2. In terms of biological role, phosphoribosylformylglycinamidine synthase involved in the purines biosynthetic pathway. Catalyzes the ATP-dependent conversion of formylglycinamide ribonucleotide (FGAR) and glutamine to yield formylglycinamidine ribonucleotide (FGAM) and glutamate. The chain is Phosphoribosylformylglycinamidine synthase from Xylella fastidiosa (strain Temecula1 / ATCC 700964).